The primary structure comprises 2242 residues: Transcription factor sma-9 (2242 aa).

Positions 120-383 (HQLAQQQAQQ…QQAQQAQLAQ (264 aa)) form a coiled coil. The span at 317-330 (AAQQAQAQNNASQQ) shows a compositional bias: low complexity. 5 disordered regions span residues 317–344 (AAQQ…SSTP), 494–553 (TPVA…SMSD), 583–617 (GAQS…SRSQ), 712–754 (LAAH…SSFP), and 1323–1349 (EDST…SPPL). Residues 331-344 (RPSVASTPALSSTP) show a composition bias toward polar residues. 2 stretches are compositionally biased toward low complexity: residues 494-523 (TPVA…ATSS) and 539-550 (SSSKAASSGNES). Over residues 583 to 601 (GAQSSVDHDSNSGGSTRTS) the composition is skewed to polar residues. A compositionally biased stretch (polar residues) spans 1324 to 1338 (DSTSAEPSTSGQSLL). 5 consecutive C2H2-type zinc fingers follow at residues 1447 to 1469 (YICD…IKSH), 1475 to 1499 (FNCT…SKTH), 1700 to 1722 (LKCD…QHTH), 1734 to 1760 (YQCS…HGVH), and 1790 to 1814 (FMCV…SKTH). Over residues 2029–2039 (SITSPIVSSST) the composition is skewed to low complexity. Disordered stretches follow at residues 2029–2059 (SITS…PTHT) and 2085–2107 (STDK…PRPI). Residues 2085–2099 (STDKAHASESLSDRL) show a composition bias toward basic and acidic residues. 2 consecutive C2H2-type zinc fingers follow at residues 2111-2134 (TKCQ…HVDH) and 2143-2167 (YKCP…VTAH). The disordered stretch occupies residues 2219-2242 (HELYAQTQQGAGSSTSNQSPKAAN). The span at 2223–2242 (AQTQQGAGSSTSNQSPKAAN) shows a compositional bias: polar residues.

Expressed in the ventral nerve cord (VNC), pharynx, intestine and seam cells (at protein level).

The protein localises to the nucleus. Transcription factor, probably acting as a transcriptional activator and repressor, involved in the TGF-beta-like dbl-1 signaling pathway. Plays a role in regulation of body size, and patterning of male-specific genital sensilla (simple sense organs), known as rays, and mating-associated structures, spicules. Required for the dorsoventral patterning of the postembryonic mesodermal lineage (M lineage), acting by antagonizing the TGF-beta-like dbl-1 signaling pathway, in part by repressing expression of transcription factor unc-130. Involved in egg-laying, perhaps via modulation of cholinergic neurotransmission. Involved in production of reactive oxygen species (ROS), acting downstream of the dbl-1 signaling pathway. Plays a role in the mitochondrial unfolded protein response (mtUPR). May play a role in modulating lifespan and in responses to proteotoxic stress. Functionally, transcription factor, probably acting as a transcriptional activator. Required for patterning of male-specific genital sensilla (simple sense organs), known as rays. Dispensable for regulation of body size. The chain is Transcription factor sma-9 from Caenorhabditis elegans.